A 144-amino-acid chain; its full sequence is Deoxyuridine 5'-triphosphate nucleotidohydrolase (144 aa).

Substrate contacts are provided by residues 63–65 (RSG), asparagine 76, 80–82 (TID), and lysine 90.

It belongs to the dUTPase family. Mg(2+) serves as cofactor.

The enzyme catalyses dUTP + H2O = dUMP + diphosphate + H(+). Its pathway is pyrimidine metabolism; dUMP biosynthesis; dUMP from dCTP (dUTP route): step 2/2. This enzyme is involved in nucleotide metabolism: it produces dUMP, the immediate precursor of thymidine nucleotides and it decreases the intracellular concentration of dUTP so that uracil cannot be incorporated into DNA. This Hydrogenobaculum sp. (strain Y04AAS1) protein is Deoxyuridine 5'-triphosphate nucleotidohydrolase.